The following is a 162-amino-acid chain: Large ribosomal subunit protein uL10 (162 aa).

This sequence belongs to the universal ribosomal protein uL10 family. Part of the ribosomal stalk of the 50S ribosomal subunit. The N-terminus interacts with L11 and the large rRNA to form the base of the stalk. The C-terminus forms an elongated spine to which L12 dimers bind in a sequential fashion forming a multimeric L10(L12)X complex.

Forms part of the ribosomal stalk, playing a central role in the interaction of the ribosome with GTP-bound translation factors. In Mycoplasma genitalium (strain ATCC 33530 / DSM 19775 / NCTC 10195 / G37) (Mycoplasmoides genitalium), this protein is Large ribosomal subunit protein uL10 (rplJ).